A 126-amino-acid polypeptide reads, in one-letter code: Calcitonin receptor-stimulating peptide 1 (126 aa).

A signal peptide spans 1-25 (MGFWKFPPFLVLSILVLYQAGMFHT). Positions 26 to 78 (APMRSAFGSPFDPATLSEEESRLLLAAMVNDYEQMKAREMQKQRAQGSGISVQ) are excised as a propeptide. An intrachain disulfide couples Cys82 to Cys87. Glycine amide is present on Gly118. The propeptide occupies 123–126 (NFWI).

As to expression, mainly expressed in the thyroid gland and CNS. Found in the nerve cells of cerebrum, hippocampus, hypothalamus, pons/midbrain and thalamus.

It is found in the secreted. Functionally, stimulates cAMP production in porcine kidney cell line LLC-PK1 via the calcitonin receptor (CT) but not via the CT-like (CL) receptor. The chain is Calcitonin receptor-stimulating peptide 1 (CRSP1) from Sus scrofa (Pig).